The primary structure comprises 265 residues: Adenosylcobinamide-GDP ribazoletransferase (265 aa).

A run of 4 helical transmembrane segments spans residues 51–71 (LVGVILGVLCALVFYFTQLIF), 72–92 (PDSVAIVLTMAFSLLLTGAFH), 121–140 (IGTYGAATLVMALLAKFVLW), and 203–223 (VASLFLGVIQTSFIVIVLFAF).

It belongs to the CobS family. Mg(2+) is required as a cofactor.

The protein localises to the cell inner membrane. It carries out the reaction alpha-ribazole + adenosylcob(III)inamide-GDP = adenosylcob(III)alamin + GMP + H(+). The enzyme catalyses alpha-ribazole 5'-phosphate + adenosylcob(III)inamide-GDP = adenosylcob(III)alamin 5'-phosphate + GMP + H(+). The protein operates within cofactor biosynthesis; adenosylcobalamin biosynthesis; adenosylcobalamin from cob(II)yrinate a,c-diamide: step 7/7. Functionally, joins adenosylcobinamide-GDP and alpha-ribazole to generate adenosylcobalamin (Ado-cobalamin). Also synthesizes adenosylcobalamin 5'-phosphate from adenosylcobinamide-GDP and alpha-ribazole 5'-phosphate. The protein is Adenosylcobinamide-GDP ribazoletransferase of Vibrio parahaemolyticus serotype O3:K6 (strain RIMD 2210633).